The chain runs to 662 residues: Probable actin-related protein 8 (662 aa).

2 stretches are compositionally biased toward basic and acidic residues: residues 50–59 and 67–77; these read AGEKDAKETE and TKQDDSKKSQV. The disordered stretch occupies residues 50-92; the sequence is AGEKDAKETESESANGDTKQDDSKKSQVEEEEDGIEESELGEE. The span at 78–89 shows a compositional bias: acidic residues; the sequence is EEEEDGIEESEL. 339–342 contributes to the ATP binding site; that stretch reads DMGA.

It belongs to the actin family. As to quaternary structure, component of the chromatin remodeling Ino80 complex. Exists as monomers and dimers, but the dimer is most probably the biologically relevant form required for stable interactions with histones that exploits the twofold symmetry of the nucleosome core.

Its subcellular location is the nucleus. In terms of biological role, probably involved in transcription regulation via its interaction with the INO80 complex, a chromatin remodeling complex. Exhibits low basal ATPase activity, and unable to polymerize. Strongly prefer nucleosomes and H3-H4 tetramers over H2A-H2B dimers, suggesting it may act as a nucleosome recognition module within the complex. This is Probable actin-related protein 8 from Schizosaccharomyces pombe (strain 972 / ATCC 24843) (Fission yeast).